Consider the following 449-residue polypeptide: UDP-N-acetylmuramoylalanine--D-glutamate ligase (449 aa).

119-125 (GTNGKTT) provides a ligand contact to ATP.

The protein belongs to the MurCDEF family.

It is found in the cytoplasm. The enzyme catalyses UDP-N-acetyl-alpha-D-muramoyl-L-alanine + D-glutamate + ATP = UDP-N-acetyl-alpha-D-muramoyl-L-alanyl-D-glutamate + ADP + phosphate + H(+). It participates in cell wall biogenesis; peptidoglycan biosynthesis. Its function is as follows. Cell wall formation. Catalyzes the addition of glutamate to the nucleotide precursor UDP-N-acetylmuramoyl-L-alanine (UMA). The protein is UDP-N-acetylmuramoylalanine--D-glutamate ligase of Lactococcus lactis subsp. cremoris (strain SK11).